The following is a 486-amino-acid chain: ATP synthase subunit beta (486 aa).

170–177 contacts ATP; sequence GGAGVGKT.

The protein belongs to the ATPase alpha/beta chains family. F-type ATPases have 2 components, CF(1) - the catalytic core - and CF(0) - the membrane proton channel. CF(1) has five subunits: alpha(3), beta(3), gamma(1), delta(1), epsilon(1). CF(0) has three main subunits: a(1), b(2) and c(9-12). The alpha and beta chains form an alternating ring which encloses part of the gamma chain. CF(1) is attached to CF(0) by a central stalk formed by the gamma and epsilon chains, while a peripheral stalk is formed by the delta and b chains.

It localises to the cell membrane. The catalysed reaction is ATP + H2O + 4 H(+)(in) = ADP + phosphate + 5 H(+)(out). Produces ATP from ADP in the presence of a proton gradient across the membrane. The catalytic sites are hosted primarily by the beta subunits. In Kineococcus radiotolerans (strain ATCC BAA-149 / DSM 14245 / SRS30216), this protein is ATP synthase subunit beta.